The sequence spans 283 residues: Formamidopyrimidine-DNA glycosylase (283 aa).

The Schiff-base intermediate with DNA role is filled by P2. The Proton donor role is filled by E3. The Proton donor; for beta-elimination activity role is filled by K60. The DNA site is built by H100, R119, and R164. The segment at 249–283 (WVYGRENKPCRKCGVKILKAKVAGRGTHWCPNCQK) adopts an FPG-type zinc-finger fold. Catalysis depends on R273, which acts as the Proton donor; for delta-elimination activity.

This sequence belongs to the FPG family. In terms of assembly, monomer. Zn(2+) is required as a cofactor.

The catalysed reaction is Hydrolysis of DNA containing ring-opened 7-methylguanine residues, releasing 2,6-diamino-4-hydroxy-5-(N-methyl)formamidopyrimidine.. It catalyses the reaction 2'-deoxyribonucleotide-(2'-deoxyribose 5'-phosphate)-2'-deoxyribonucleotide-DNA = a 3'-end 2'-deoxyribonucleotide-(2,3-dehydro-2,3-deoxyribose 5'-phosphate)-DNA + a 5'-end 5'-phospho-2'-deoxyribonucleoside-DNA + H(+). Functionally, involved in base excision repair of DNA damaged by oxidation or by mutagenic agents. Acts as a DNA glycosylase that recognizes and removes damaged bases. Has a preference for oxidized purines, such as 7,8-dihydro-8-oxoguanine (8-oxoG). Has AP (apurinic/apyrimidinic) lyase activity and introduces nicks in the DNA strand. Cleaves the DNA backbone by beta-delta elimination to generate a single-strand break at the site of the removed base with both 3'- and 5'-phosphates. The chain is Formamidopyrimidine-DNA glycosylase from Prochlorococcus marinus (strain SARG / CCMP1375 / SS120).